Consider the following 345-residue polypeptide: Transcription factor 19 (345 aa).

Positions 31–88 (YRLGHRADLCDVALRPQQEPGLISGIHAELHAEPRGDDWRVSLEDHSSQGTLVNNVRL) constitute an FHA domain. Position 78 is a phosphoserine (serine 78). Positions 190–227 (LTFSPSWGGPKSLPVPAPPGEMGTTPSAPPQRNRRKSV) are disordered. The PHD-type zinc finger occupies 293–342 (AAPCCCLPQEETVAWVQCDGCDVWFHVACVGCSIQAAREADFRCPGCRAG). The Zn(2+) site is built by cysteine 296, cysteine 298, cysteine 310, cysteine 313, histidine 318, cysteine 321, cysteine 336, and cysteine 339.

Its subcellular location is the nucleus. Its function is as follows. Potential transcription factor that may play a role in the regulation of genes involved in cell cycle G1/S transition. May bind to regulatory elements of genes, including the promoter of the transcription factor FOXO1. This Homo sapiens (Human) protein is Transcription factor 19 (TCF19).